Here is a 475-residue protein sequence, read N- to C-terminus: tRNA-2-methylthio-N(6)-dimethylallyladenosine synthase (475 aa).

Residues 1–10 (MHETTLKREG) show a composition bias toward basic and acidic residues. The tract at residues 1–25 (MHETTLKREGASTPSNPTPSTHAAG) is disordered. Positions 12–23 (STPSNPTPSTHA) are enriched in polar residues. One can recognise an MTTase N-terminal domain in the interval 27 to 144 (GKIYIRTFGC…LPELIRRRRD (118 aa)). [4Fe-4S] cluster-binding residues include C36, C73, C107, C181, C185, and C188. In terms of domain architecture, Radical SAM core spans 167-400 (RVEGATAFVS…QALINEQAAA (234 aa)). The TRAM domain occupies 403–466 (QSMVGTRQRL…TNSLRGRVAG (64 aa)).

It belongs to the methylthiotransferase family. MiaB subfamily. As to quaternary structure, monomer. The cofactor is [4Fe-4S] cluster.

It localises to the cytoplasm. It carries out the reaction N(6)-dimethylallyladenosine(37) in tRNA + (sulfur carrier)-SH + AH2 + 2 S-adenosyl-L-methionine = 2-methylsulfanyl-N(6)-dimethylallyladenosine(37) in tRNA + (sulfur carrier)-H + 5'-deoxyadenosine + L-methionine + A + S-adenosyl-L-homocysteine + 2 H(+). Functionally, catalyzes the methylthiolation of N6-(dimethylallyl)adenosine (i(6)A), leading to the formation of 2-methylthio-N6-(dimethylallyl)adenosine (ms(2)i(6)A) at position 37 in tRNAs that read codons beginning with uridine. The protein is tRNA-2-methylthio-N(6)-dimethylallyladenosine synthase of Bordetella avium (strain 197N).